We begin with the raw amino-acid sequence, 199 residues long: 3-isopropylmalate dehydratase small subunit (199 aa).

Belongs to the LeuD family. LeuD type 1 subfamily. In terms of assembly, heterodimer of LeuC and LeuD.

The enzyme catalyses (2R,3S)-3-isopropylmalate = (2S)-2-isopropylmalate. It functions in the pathway amino-acid biosynthesis; L-leucine biosynthesis; L-leucine from 3-methyl-2-oxobutanoate: step 2/4. Functionally, catalyzes the isomerization between 2-isopropylmalate and 3-isopropylmalate, via the formation of 2-isopropylmaleate. This Aeromonas salmonicida (strain A449) protein is 3-isopropylmalate dehydratase small subunit.